The sequence spans 354 residues: Guanine nucleotide-binding protein G(i) subunit alpha-1 (354 aa).

Residue glycine 2 is the site of N-myristoyl glycine attachment. Residue cysteine 3 is the site of S-palmitoyl cysteine attachment. The G-alpha domain occupies 32–354 (REVKLLLLGA…KNNLKDCGLF (323 aa)). A G1 motif region spans residues 35–48 (KLLLLGAGESGKST). Residues 43–48 (ESGKST), 150–151 (DS), and 175–178 (LRTR) each bind GTP. Serine 47 lines the Mg(2+) pocket. Residues 173 to 181 (DVLRTRVKT) are G2 motif. Position 181 (threonine 181) interacts with Mg(2+). The tract at residues 196-205 (FKMFDVGGQR) is G3 motif. Residues 200 to 204 (DVGGQ), 269 to 272 (NKKD), and alanine 326 contribute to the GTP site. The tract at residues 265–272 (ILFLNKKD) is G4 motif. The segment at 324 to 329 (TCATDT) is G5 motif.

This sequence belongs to the G-alpha family. G(i/o/t/z) subfamily. As to quaternary structure, heterotrimeric G proteins are composed of 3 units; alpha, beta and gamma. The alpha chain contains the guanine nucleotide binding site. Part of a spindle orientation complex at least composed of GNAI1, GPSM2 and NUMA1. Identified in complex with the beta subunit GNB1 and the gamma subunit GNG1. Identified in complex with the beta subunit GNB1 and the gamma subunit GNG2. Component of the TAS2R14-GNAI1 complex, consisting of TAS2R14, GNAI1, GNB1 and GNG2; within the complex interacts with TAS2R14; this complex plays a role in the perception of bitterness. GTP binding causes dissociation of the heterotrimer, liberating the individual subunits so that they can interact with downstream effector proteins. Interacts (GDP-bound form) with GPSM1; this inhibits guanine nucleotide exchange and GTP binding. Interacts (GDP-bound form) with GPSM2 (via GoLoco domains); this inhibits guanine nucleotide exchange. Interacts with RGS10; this strongly enhances GTP hydrolysis. Interacts with RGS1 and RGS16; this strongly enhances GTPase activity. Interacts with RGS4. Interacts with RGS12. Interacts (via active GTP- or inactive GDP-bound forms) with RGS14 (via RGS and GoLoco domains). Interacts with RGS3, RGS6, RGS7, RGS8, RGS17, RGS18 and RGS20 (in vitro). Interacts (GDP-bound form) with RIC8A (via C-terminus); promoting GNAI1 folding and association with the plasma membrane. Interacts (inactive GDP-bound form) with NUCB1 (via GBA motif); the interaction leads to activation of GNAI1. Interacts (inactive GDP-bound form) with CCDC88C/DAPLE (via GBA motif); the interaction leads to activation of GNAI1. Interacts (inactive GDP-bound form) with CCDC8A/GIV (via GBA motif). In terms of processing, myristoylation at Gly-2 is required for membrane anchoring before palmitoylation. Post-translationally, palmitoylation at Cys-3 varies with membrane lipid composition.

The protein resides in the nucleus. The protein localises to the cytoplasm. Its subcellular location is the cell membrane. It localises to the cytoskeleton. It is found in the microtubule organizing center. The protein resides in the centrosome. The protein localises to the cell cortex. Its subcellular location is the membrane. The catalysed reaction is GTP + H2O = GDP + phosphate + H(+). Its function is as follows. Guanine nucleotide-binding proteins (G proteins) function as transducers downstream of G protein-coupled receptors (GPCRs) in numerous signaling cascades. The alpha chain contains the guanine nucleotide binding site and alternates between an active, GTP-bound state and an inactive, GDP-bound state. Signaling by an activated GPCR promotes GDP release and GTP binding. The alpha subunit has a low GTPase activity that converts bound GTP to GDP, thereby terminating the signal. Both GDP release and GTP hydrolysis are modulated by numerous regulatory proteins. Signaling is mediated via effector proteins, such as adenylate cyclase. Inhibits adenylate cyclase activity of ADCY1, ADCY5 and ADCY6, leading to decreased intracellular cAMP levels. The inactive GDP-bound form prevents the association of RGS14 with centrosomes and is required for the translocation of RGS14 from the cytoplasm to the plasma membrane. Required for normal cytokinesis during mitosis. Required for cortical dynein-dynactin complex recruitment during metaphase. The polypeptide is Guanine nucleotide-binding protein G(i) subunit alpha-1 (GNAI1) (Bos taurus (Bovine)).